Reading from the N-terminus, the 704-residue chain is Ankyrin repeat and LEM domain-containing protein 1 homolog (704 aa).

Residues 1–29 (MPPNGAITTTPRSRMPPTTPSSGKSRPKK) are disordered. Positions 8–22 (TTTPRSRMPPTTPSS) are enriched in low complexity. 2 ANK repeats span residues 28-59 (KKET…NVNA) and 63-93 (DGAT…PMSA). Disordered stretches follow at residues 247–293 (NEDV…SQET), 314–358 (NAGL…ANTT), and 381–421 (SKSA…TTVD). Residues 276 to 288 (RKQRTPVNHHKRS) are compositionally biased toward basic residues. Low complexity-rich tracts occupy residues 329–346 (EPAI…TPKT) and 384–405 (AKSS…SFSS). Positions 425–470 (IRKIRRLREGELKSELKKFGISPAGPLDARTRRLYEKKLLIERRKI) constitute an LEM domain. The region spanning 525–635 (YNAFCYLIMD…AVKLKNLRNK (111 aa)) is the GIY-YIG domain.

Phosphorylated. Phosphorylated during telophase when localized at the midbody.

The protein resides in the cytoplasm. The protein localises to the nucleus. Its subcellular location is the chromosome. It localises to the midbody. It is found in the cytoskeleton. The protein resides in the spindle. Its activity is regulated as follows. Inhibited by EDTA. In terms of biological role, endonuclease which, in association with baf-1, plays an essential role during embryogenesis in the DNA repair response following DNA damage probably by ensuring proper chromosome segregation. Also required during postembryonic cell divisions after DNA damage caused by ionizing radiation to ensure normal cell proliferation. Resolves chromatin bridges in late mitosis that result from incomplete DNA replication, defective chromosome condensation or unresolved recombination intermediates. Together with brc-1, contributes to genome integrity by resolving mitotic chromatin bridges that result from incomplete processing of DNA breaks. In parallel to the slx-1/mus-81 pathway, acts in processing early recombination intermediates in meiotic prophase I to prevent illegitimate recombination. Also involved in processing remaining, erroneous recombination intermediates that persist into the second meiotic division. This Caenorhabditis elegans protein is Ankyrin repeat and LEM domain-containing protein 1 homolog.